The primary structure comprises 486 residues: Maternal protein exuperantia (486 aa).

2 disordered regions span residues 202-233 and 386-477; these read NARV…RDEF and STIR…ISLP. Residues 218–233 are compositionally biased toward basic and acidic residues; sequence ADKHVKNGLQKERDEF. The segment covering 387-397 has biased composition (basic residues); that stretch reads TIRRRNKRNTP. Polar residues-rich tracts occupy residues 420-437 and 464-476; these read KSQS…TPSP and SALN…SISL.

Ensures the proper localization of the mRNA of the bicoid gene to the anterior regions of the oocyte thus playing a fundamental role in the establishment of the polarity of the oocyte. May bind the bcd mRNA. The sequence is that of Maternal protein exuperantia (exu) from Drosophila virilis (Fruit fly).